Here is a 375-residue protein sequence, read N- to C-terminus: Chaperone protein DnaJ (375 aa).

Positions 5–70 (DYYEVLGVNR…RKRASYDQFG (66 aa)) constitute a J domain. The segment at 133-211 (GLSRTIKVPT…CHGQGRQQQT (79 aa)) adopts a CR-type zinc-finger fold. Residues C146, C149, C163, C166, C185, C188, C199, and C202 each contribute to the Zn(2+) site. 4 CXXCXGXG motif repeats span residues 146-153 (CKTCNGSG), 163-170 (CPRCNGSG), 185-192 (CSVCRGRG), and 199-206 (CTDCHGQG).

Belongs to the DnaJ family. In terms of assembly, homodimer. The cofactor is Zn(2+).

The protein resides in the cytoplasm. Functionally, participates actively in the response to hyperosmotic and heat shock by preventing the aggregation of stress-denatured proteins and by disaggregating proteins, also in an autonomous, DnaK-independent fashion. Unfolded proteins bind initially to DnaJ; upon interaction with the DnaJ-bound protein, DnaK hydrolyzes its bound ATP, resulting in the formation of a stable complex. GrpE releases ADP from DnaK; ATP binding to DnaK triggers the release of the substrate protein, thus completing the reaction cycle. Several rounds of ATP-dependent interactions between DnaJ, DnaK and GrpE are required for fully efficient folding. Also involved, together with DnaK and GrpE, in the DNA replication of plasmids through activation of initiation proteins. The protein is Chaperone protein DnaJ of Coxiella burnetii (strain CbuK_Q154) (Coxiella burnetii (strain Q154)).